The sequence spans 583 residues: Radixin (583 aa).

The FERM domain maps to 5-295 (INVRVTTMDA…GNHELYMRRR (291 aa)). 60 to 63 (KLNK) is an a 1,2-diacyl-sn-glycero-3-phospho-(1D-myo-inositol) binding site. At Lys-83 the chain carries N6-succinyllysine. Residue Lys-278 coordinates a 1,2-diacyl-sn-glycero-3-phospho-(1D-myo-inositol). 3 disordered regions span residues 309 to 336 (AREE…AEKE), 374 to 407 (ELDQ…AKQA), and 460 to 526 (KEEL…RVKK). The span at 374–400 (ELDQERKRAKEEAERLEKERQAAEEAK) shows a compositional bias: basic and acidic residues. Over residues 469 to 480 (APPPPPPPPVIP) the composition is skewed to pro residues. Composition is skewed to basic and acidic residues over residues 483–492 (ENEHDEHDEN) and 506–525 (MNHR…ERVK). Thr-564 is subject to Phosphothreonine; by ROCK2.

In terms of assembly, interacts with CPNE1 (via VWFA domain) and CPNE4 (via VWFA domain). Binds NHERF1. Interacts with NHERF1, NHERF2, LAYN, MME/NEP and ICAM2. Interacts (via FERM domain) with SPN/CD43 cytoplasmic tail. Interacts with CD44. Interacts with CLIC5; may work together in a complex which also includes EZR and MYO6 to stabilize linkages between the plasma membrane and subjacent actin cytoskeleton at the base of stereocilia. Post-translationally, phosphorylated by tyrosine-protein kinases. Phosphorylation by ROCK2 suppresses the head-to-tail association of the N-terminal and C-terminal halves resulting in an opened conformation which is capable of actin and membrane-binding.

Its subcellular location is the cell membrane. The protein resides in the cytoplasm. It localises to the cytoskeleton. The protein localises to the cleavage furrow. It is found in the cell projection. Its subcellular location is the microvillus. The protein resides in the stereocilium. Its activity is regulated as follows. A head-to-tail association, of the N-terminal and C-terminal halves results in a closed conformation (inactive form) which is incapable of actin or membrane-binding. Its function is as follows. Probably plays a crucial role in the binding of the barbed end of actin filaments to the plasma membrane. This Bos taurus (Bovine) protein is Radixin (RDX).